The following is a 207-amino-acid chain: Macrophage immunometabolism regulator (207 aa).

Met-1 is modified (N-acetylmethionine). A disordered region spans residues 1–41; the sequence is MEVDINGDSRSTLTTLPLPVAEGSSPGKAEAEKPRCSSTPC. A phosphoserine mark is found at Ser-25 and Ser-167.

It belongs to the UNC119-binding protein family. As to quaternary structure, interacts with UNC119 and UNC119B; interaction preferentially takes place when UNC119 and UNC119B are unliganded with myristoylated proteins. As to expression, highly expressed in photoreceptors.

It localises to the cytoplasm. The protein localises to the cell projection. Its subcellular location is the cilium. In terms of biological role, regulates the macrophage function, by enhancing the resolution of inflammation and wound repair functions mediated by M2 macrophages. The regulation of macrophage function is, due at least in part, to its ability to inhibit glycolysis. May also play a role in trafficking of proteins via its interaction with UNC119 and UNC119B cargo adapters: may help the release of UNC119 and UNC119B cargo or the recycling of UNC119 and UNC119B. May play a role in ciliary membrane localization via its interaction with UNC119B and protein transport into photoreceptor cells. In Mus musculus (Mouse), this protein is Macrophage immunometabolism regulator.